A 247-amino-acid chain; its full sequence is Type II restriction enzyme SmaI (247 aa).

Requires Mg(2+) as cofactor. K(+) serves as cofactor.

It catalyses the reaction Endonucleolytic cleavage of DNA to give specific double-stranded fragments with terminal 5'-phosphates.. In terms of biological role, a P subtype restriction enzyme that recognizes the double-stranded sequence 5'-CCCGGG-3' and cleaves after C-3. The polypeptide is Type II restriction enzyme SmaI (smaIR) (Serratia marcescens).